An 864-amino-acid chain; its full sequence is NT-3 growth factor receptor (864 aa).

The N-terminal stretch at 1-31 (MDVSLCPAKCSFWRIFLLGSVWLDYVGSVLA) is a signal peptide. Disulfide bonds link C32–C38 and C36–C45. Topologically, residues 32 to 429 (CPANCVCSKT…TVTHKPEEDT (398 aa)) are extracellular. 3 N-linked (GlcNAc...) asparagine glycosylation sites follow: N68, N72, and N79. LRR repeat units follow at residues 104–125 (GLQKLTIKNSGLRNIQPRAFAK) and 128–149 (HLRYINLSSNRLTTLSWQLFQT). N-linked (GlcNAc...) asparagine glycosylation is found at N133 and N163. Residues 160-209 (NFFNCSCDIRWMQLWQEQGEARLDSQSLYCISADGSQLPLFRMNISQCDL) form the LRRCT domain. Disulfide bonds link C164/C189 and C166/C207. 7 N-linked (GlcNAc...) asparagine glycosylation sites follow: N203, N218, N232, N259, N267, N272, and N294. Ig-like C2-type domains are found at residues 210-300 (PEIS…VALT) and 309-382 (SLVE…IAKN). A disulfide bridge links C231 with C284. C320 and C362 form a disulfide bridge. N375 and N388 each carry an N-linked (GlcNAc...) asparagine glycan. The chain crosses the membrane as a helical span at residues 430 to 453 (FGVSIAVGLAAFACVLLVVLFIMI). Over 454–864 (NKYGRRSKFG…ATPIYLDILG (411 aa)) the chain is Cytoplasmic. S493 bears the Phosphoserine mark. Position 516 is a phosphotyrosine; by autocatalysis (Y516). The 316-residue stretch at 538–853 (IVLKRELGEG…EIYKILHALG (316 aa)) folds into the Protein kinase domain. Residues 544–552 (LGEGAFGKV) and K572 contribute to the ATP site. D679 serves as the catalytic Proton acceptor. Residues Y705, Y709, Y710, and Y859 each carry the phosphotyrosine; by autocatalysis modification.

Belongs to the protein kinase superfamily. Tyr protein kinase family. Insulin receptor subfamily. As to quaternary structure, exists in a dynamic equilibrium between monomeric (low affinity) and dimeric (high affinity) structures. Binds SH2B2. Interacts with SQSTM1 and KIDINS220. Interacts with PTPRS. Interacts with MAPK8IP3/JIP3. In terms of processing, ligand-mediated auto-phosphorylation. Widely expressed, mainly in the nervous tissue.

The protein resides in the membrane. The enzyme catalyses L-tyrosyl-[protein] + ATP = O-phospho-L-tyrosyl-[protein] + ADP + H(+). Receptor tyrosine kinase involved in nervous system and probably heart development. Upon binding of its ligand NTF3/neurotrophin-3, NTRK3 autophosphorylates and activates different signaling pathways, including the phosphatidylinositol 3-kinase/AKT and the MAPK pathways, that control cell survival and differentiation. NTRK3 isoforms containing insertions within the kinase domain can autophosphorylate in response to NTF3/neurotrophin-3, but cannot mediate downstream phenotypic responses. The chain is NT-3 growth factor receptor (Ntrk3) from Rattus norvegicus (Rat).